A 248-amino-acid chain; its full sequence is Sugar fermentation stimulation protein homolog (248 aa).

Belongs to the SfsA family.

The sequence is that of Sugar fermentation stimulation protein homolog from Methylorubrum extorquens (strain PA1) (Methylobacterium extorquens).